A 94-amino-acid chain; its full sequence is Cell division protein FtsB (94 aa).

The Cytoplasmic segment spans residues 1–3; sequence MRT. The chain crosses the membrane as a helical span at residues 4–21; that stretch reads FAIFLLIALGWLQYTLWF. Over 22–94 the chain is Periplasmic; that stretch reads GKNGMSDYAQ…YRIIDENSEG (73 aa). A coiled-coil region spans residues 33–71; that stretch reads SNDVALQEEVNQGLRNRNEQMFAEIDDLKKGSEAIEERA.

This sequence belongs to the FtsB family. As to quaternary structure, part of a complex composed of FtsB, FtsL and FtsQ.

Its subcellular location is the cell inner membrane. Essential cell division protein. May link together the upstream cell division proteins, which are predominantly cytoplasmic, with the downstream cell division proteins, which are predominantly periplasmic. This Aliivibrio fischeri (strain ATCC 700601 / ES114) (Vibrio fischeri) protein is Cell division protein FtsB.